A 129-amino-acid polypeptide reads, in one-letter code: Cuticle protein 12.5 (129 aa).

Tandem repeats lie at residues 7–10 (AAPA), 15–18 (AAPA), 23–26 (AAPA), 28–31 (AAPV), 37–40 (AAPA), 67–70 (AAPA), 79–82 (AAPA), 91–94 (AAPA), 103–106 (AAPA), and 117–120 (AAPA).

Component of the cuticle of migratory locust which contains more than 100 different structural proteins. This is Cuticle protein 12.5 from Locusta migratoria (Migratory locust).